The following is a 185-amino-acid chain: Ribosome hibernation promotion factor (185 aa).

A probably still associates with ribosome region spans residues 1–125; it reads MIKFNIRGEN…PLDTTDEVAE (125 aa). The interval 126 to 185 is required but not sufficient to restore ribosome dimerization, in vitro will replace E.coli RMF in ribosome dimerization; the sequence is DHVDIVRTKHVALKPMDAEEAVLQMDMLGHDFYVFTDADSNGTHVVYRRTDGRYGLIETE.

This sequence belongs to the HPF/YfiA ribosome-associated protein family. Long HPF subfamily. In terms of assembly, interacts with 100S ribosomes in stationary phase; alters the relative position of the 30S and 50S subunits.

Its subcellular location is the cytoplasm. Functionally, required for dimerization of active 70S ribosomes into 100S ribosomes in stationary phase; 100S ribosomes are translationally inactive and sometimes present during exponential growth. Able to dimerize E.coli 70S ribosomes in vitro. The protein is Ribosome hibernation promotion factor of Lactococcus lactis subsp. cremoris (strain MG1363).